The chain runs to 131 residues: Profilin-6 (131 aa).

A disulfide bridge connects residues Cys-13 and Cys-115. Positions 81–97 match the Involved in PIP2 interaction motif; the sequence is AVIRGKKGSGGITVKKT. Thr-111 is modified (phosphothreonine).

The protein belongs to the profilin family. Occurs in many kinds of cells as a complex with monomeric actin in a 1:1 ratio. Phosphorylated by MAP kinases.

The protein localises to the cytoplasm. Its subcellular location is the cytoskeleton. Binds to actin and affects the structure of the cytoskeleton. At high concentrations, profilin prevents the polymerization of actin, whereas it enhances it at low concentrations. This Zea mays (Maize) protein is Profilin-6.